The primary structure comprises 545 residues: RNA-directed RNA polymerase beta chain (545 aa).

A RdRp catalytic domain is found at 243 to 373 (RLAQQGSRDG…PNLRKTFTSG (131 aa)).

In terms of assembly, part of the viral RNA-dependent RNA polymerase complex, the other subunits are probably the host ribosomal protein S1, EF-Tu and EF-Ts.

The catalysed reaction is RNA(n) + a ribonucleoside 5'-triphosphate = RNA(n+1) + diphosphate. Its function is as follows. This is the catalytic subunit of the viral RNA-dependent RNA polymerase complex. This complex is involved in viral RNA replication that produces (+)-stranded genomes via a complementary, (-)-stranded intermediate. The protein is RNA-directed RNA polymerase beta chain of Enterobacteria phage fr (Bacteriophage fr).